A 292-amino-acid polypeptide reads, in one-letter code: uncharacterized protein (292 aa).

A helical membrane pass occupies residues 13–35 (LFILFIIVVCIYLLPRVAINAFY).

Belongs to the serine esterase family.

The protein resides in the membrane. This is an uncharacterized protein from Salmonella typhi.